A 30-amino-acid chain; its full sequence is Cycloviolacin-O7 (30 aa).

Positions 1 to 30 (SIPCGESCVWIPCTITALAGCKCKSKVCYN) form a cross-link, cyclopeptide (Ser-Asn). 3 disulfide bridges follow: Cys-4–Cys-21, Cys-8–Cys-23, and Cys-13–Cys-28.

This is a cyclic peptide.

Functionally, probably participates in a plant defense mechanism. The sequence is that of Cycloviolacin-O7 from Viola odorata (Sweet violet).